Reading from the N-terminus, the 357-residue chain is Protein RecA (357 aa).

73 to 80 contributes to the ATP binding site; sequence GPESSGKT.

The protein belongs to the RecA family.

It is found in the cytoplasm. Can catalyze the hydrolysis of ATP in the presence of single-stranded DNA, the ATP-dependent uptake of single-stranded DNA by duplex DNA, and the ATP-dependent hybridization of homologous single-stranded DNAs. It interacts with LexA causing its activation and leading to its autocatalytic cleavage. The polypeptide is Protein RecA (Nitratidesulfovibrio vulgaris (strain DSM 19637 / Miyazaki F) (Desulfovibrio vulgaris)).